The sequence spans 180 residues: Large ribosomal subunit protein uL5 (180 aa).

Belongs to the universal ribosomal protein uL5 family. In terms of assembly, part of the 50S ribosomal subunit; part of the 5S rRNA/L5/L18/L25 subcomplex. Contacts the 5S rRNA and the P site tRNA. Forms a bridge to the 30S subunit in the 70S ribosome.

Its function is as follows. This is one of the proteins that bind and probably mediate the attachment of the 5S RNA into the large ribosomal subunit, where it forms part of the central protuberance. In the 70S ribosome it contacts protein S13 of the 30S subunit (bridge B1b), connecting the 2 subunits; this bridge is implicated in subunit movement. Contacts the P site tRNA; the 5S rRNA and some of its associated proteins might help stabilize positioning of ribosome-bound tRNAs. The sequence is that of Large ribosomal subunit protein uL5 from Brevibacillus brevis (strain 47 / JCM 6285 / NBRC 100599).